We begin with the raw amino-acid sequence, 298 residues long: ATP synthase gamma chain (298 aa).

It belongs to the ATPase gamma chain family. F-type ATPases have 2 components, CF(1) - the catalytic core - and CF(0) - the membrane proton channel. CF(1) has five subunits: alpha(3), beta(3), gamma(1), delta(1), epsilon(1). CF(0) has three main subunits: a, b and c.

Its subcellular location is the cell inner membrane. Its function is as follows. Produces ATP from ADP in the presence of a proton gradient across the membrane. The gamma chain is believed to be important in regulating ATPase activity and the flow of protons through the CF(0) complex. The chain is ATP synthase gamma chain from Zymomonas mobilis subsp. mobilis (strain ATCC 31821 / ZM4 / CP4).